A 46-amino-acid chain; its full sequence is Defensin Tk-AMP-D5 (46 aa).

Disulfide bonds link cysteine 3/cysteine 46, cysteine 14/cysteine 34, cysteine 20/cysteine 40, and cysteine 24/cysteine 42.

Its function is as follows. Plant defense peptide. This chain is Defensin Tk-AMP-D5, found in Triticum kiharae (Wheat).